The sequence spans 610 residues: DEAD-box ATP-dependent RNA helicase 9, mitochondrial (610 aa).

Residues 1 to 66 (MISTVLRRSI…SSPFGVKVRD (66 aa)) constitute a mitochondrion transit peptide. Residues 116 to 144 (LAIADLGISPEIVKALKGRGIEKLFPIQK) carry the Q motif motif. The region spanning 147–321 (LEPAMEGRDM…KKYLNNPLTI (175 aa)) is the Helicase ATP-binding domain. 160–167 (ARTGTGKT) is a binding site for ATP. The short motif at 269–272 (DEAD) is the DEAD box element. A Helicase C-terminal domain is found at 350 to 494 (IIGPLVKEHG…ELPSIAVERG (145 aa)). Gly residues predominate over residues 542–557 (SGRSGGGGGSYGGSGG). The tract at residues 542–610 (SGRSGGGGGS…FGSNDGKRSY (69 aa)) is disordered. Positions 558 to 572 (SSSRYSGGSDRSSGF) are enriched in low complexity. Residues 573-585 (GSFGSGGSSGGFG) are compositionally biased toward gly residues. Residues 586-596 (SDRSSQSSGRS) show a composition bias toward low complexity.

It belongs to the DEAD box helicase family. DDX21/DDX50 subfamily.

It is found in the mitochondrion. The catalysed reaction is ATP + H2O = ADP + phosphate + H(+). The chain is DEAD-box ATP-dependent RNA helicase 9, mitochondrial (RH9) from Arabidopsis thaliana (Mouse-ear cress).